A 354-amino-acid polypeptide reads, in one-letter code: Divinyl chlorophyll a/b light-harvesting protein PcbG (354 aa).

Transmembrane regions (helical) follow at residues 27–47 (FIAA…ASTL), 65–85 (IFLA…VWTG), 88–108 (VASV…GALS), 201–221 (VLGG…FHIA), 241–261 (AVLS…AFWC), and 308–328 (LTNV…WHAI).

This sequence belongs to the PsbB/PsbC family. IsiA/Pcb subfamily. The antenna complex consists of divinyl chlorophylls (a and b) and divinyl chlorophyll a/b binding proteins and binds more divinyl chlorophyll b than does the antenna complex from high-light-adapted Prochlorococcus. The cofactor is divinyl chlorophyll a. Requires divinyl chlorophyll b as cofactor.

It is found in the cellular thylakoid membrane. The antenna complex functions as a light receptor, it captures and delivers excitation energy to photosystems II and I. The Prochlorales pcb genes are not related to higher plant LHCs. This chain is Divinyl chlorophyll a/b light-harvesting protein PcbG (pcbG), found in Prochlorococcus marinus (strain NATL2A).